Reading from the N-terminus, the 374-residue chain is Chaperone protein DnaJ (374 aa).

The region spanning 5 to 70 is the J domain; the sequence is DYYEILGVSR…QKRAAYDQYG (66 aa). The segment at 129–207 adopts a CR-type zinc-finger fold; the sequence is GVTREIRIPT…CHGHGRVEKS (79 aa). Zn(2+)-binding residues include C142, C145, C159, C162, C181, C184, C195, and C198. 4 CXXCXGXG motif repeats span residues 142–149, 159–166, 181–188, and 195–202; these read CDVCHGSG, CPTCHGQG, CPTCQGQG, and CTKCHGHG.

This sequence belongs to the DnaJ family. As to quaternary structure, homodimer. The cofactor is Zn(2+).

It localises to the cytoplasm. In terms of biological role, participates actively in the response to hyperosmotic and heat shock by preventing the aggregation of stress-denatured proteins and by disaggregating proteins, also in an autonomous, DnaK-independent fashion. Unfolded proteins bind initially to DnaJ; upon interaction with the DnaJ-bound protein, DnaK hydrolyzes its bound ATP, resulting in the formation of a stable complex. GrpE releases ADP from DnaK; ATP binding to DnaK triggers the release of the substrate protein, thus completing the reaction cycle. Several rounds of ATP-dependent interactions between DnaJ, DnaK and GrpE are required for fully efficient folding. Also involved, together with DnaK and GrpE, in the DNA replication of plasmids through activation of initiation proteins. The sequence is that of Chaperone protein DnaJ from Sodalis glossinidius (strain morsitans).